Here is a 200-residue protein sequence, read N- to C-terminus: Holliday junction branch migration complex subunit RuvA (200 aa).

Residues 1 to 64 (MYAYFRGRLV…EDALQLYGFA (64 aa)) are domain I. Residues 65–143 (TEEEKQLFRL…KLAPVGSAVA (79 aa)) form a domain II region. Residues 144–154 (SVAADRGGFRE) form a flexible linker region. The tract at residues 154 to 200 (EDAVNALMTLGFPRPVANQAVGCALEPEPDASLEVVIKRALATMHNR) is domain III.

It belongs to the RuvA family. As to quaternary structure, homotetramer. Forms an RuvA(8)-RuvB(12)-Holliday junction (HJ) complex. HJ DNA is sandwiched between 2 RuvA tetramers; dsDNA enters through RuvA and exits via RuvB. An RuvB hexamer assembles on each DNA strand where it exits the tetramer. Each RuvB hexamer is contacted by two RuvA subunits (via domain III) on 2 adjacent RuvB subunits; this complex drives branch migration. In the full resolvosome a probable DNA-RuvA(4)-RuvB(12)-RuvC(2) complex forms which resolves the HJ.

The protein localises to the cytoplasm. The RuvA-RuvB-RuvC complex processes Holliday junction (HJ) DNA during genetic recombination and DNA repair, while the RuvA-RuvB complex plays an important role in the rescue of blocked DNA replication forks via replication fork reversal (RFR). RuvA specifically binds to HJ cruciform DNA, conferring on it an open structure. The RuvB hexamer acts as an ATP-dependent pump, pulling dsDNA into and through the RuvAB complex. HJ branch migration allows RuvC to scan DNA until it finds its consensus sequence, where it cleaves and resolves the cruciform DNA. This is Holliday junction branch migration complex subunit RuvA from Chlorobium phaeovibrioides (strain DSM 265 / 1930) (Prosthecochloris vibrioformis (strain DSM 265)).